The following is a 296-amino-acid chain: Homoserine kinase (296 aa).

ATP is bound at residue 86-96 (KAGSGLGSSAA).

Belongs to the GHMP kinase family. Homoserine kinase subfamily.

The protein localises to the cytoplasm. The catalysed reaction is L-homoserine + ATP = O-phospho-L-homoserine + ADP + H(+). It functions in the pathway amino-acid biosynthesis; L-threonine biosynthesis; L-threonine from L-aspartate: step 4/5. In terms of biological role, catalyzes the ATP-dependent phosphorylation of L-homoserine to L-homoserine phosphate. This is Homoserine kinase (thrB) from Methanocaldococcus jannaschii (strain ATCC 43067 / DSM 2661 / JAL-1 / JCM 10045 / NBRC 100440) (Methanococcus jannaschii).